Reading from the N-terminus, the 295-residue chain is Cyclin-G1 (295 aa).

This sequence belongs to the cyclin family. Cyclin G subfamily. In terms of tissue distribution, high levels in skeletal muscle, ovary, kidney and colon.

The protein resides in the nucleus. May play a role in growth regulation. Is associated with G2/M phase arrest in response to DNA damage. May be an intermediate by which p53 mediates its role as an inhibitor of cellular proliferation. In Homo sapiens (Human), this protein is Cyclin-G1 (CCNG1).